A 132-amino-acid chain; its full sequence is Ribonuclease P protein component (132 aa).

Belongs to the RnpA family. In terms of assembly, consists of a catalytic RNA component (M1 or rnpB) and a protein subunit.

The catalysed reaction is Endonucleolytic cleavage of RNA, removing 5'-extranucleotides from tRNA precursor.. Its function is as follows. RNaseP catalyzes the removal of the 5'-leader sequence from pre-tRNA to produce the mature 5'-terminus. It can also cleave other RNA substrates such as 4.5S RNA. The protein component plays an auxiliary but essential role in vivo by binding to the 5'-leader sequence and broadening the substrate specificity of the ribozyme. The chain is Ribonuclease P protein component from Marinobacter nauticus (strain ATCC 700491 / DSM 11845 / VT8) (Marinobacter aquaeolei).